The chain runs to 519 residues: ATP synthase subunit alpha 1 (519 aa).

172–179 (GDRQTGKT) serves as a coordination point for ATP.

The protein belongs to the ATPase alpha/beta chains family. In terms of assembly, F-type ATPases have 2 components, CF(1) - the catalytic core - and CF(0) - the membrane proton channel. CF(1) has five subunits: alpha(3), beta(3), gamma(1), delta(1), epsilon(1). CF(0) has three main subunits: a(1), b(2) and c(9-12). The alpha and beta chains form an alternating ring which encloses part of the gamma chain. CF(1) is attached to CF(0) by a central stalk formed by the gamma and epsilon chains, while a peripheral stalk is formed by the delta and b chains.

It localises to the cell inner membrane. The catalysed reaction is ATP + H2O + 4 H(+)(in) = ADP + phosphate + 5 H(+)(out). In terms of biological role, produces ATP from ADP in the presence of a proton gradient across the membrane. The alpha chain is a regulatory subunit. The sequence is that of ATP synthase subunit alpha 1 from Psychromonas ingrahamii (strain DSM 17664 / CCUG 51855 / 37).